Reading from the N-terminus, the 493-residue chain is Membrane-bound lytic murein transglycosylase F (493 aa).

Positions 1–21 (MKRLRFNYLLIGLITVLLALA) are cleaved as a signal peptide. Residues 22–268 (LWPSIPWYGG…RLDEKYLGHV (247 aa)) form a non-LT domain region. The tract at residues 269–493 (GTFDYVDTRT…LNPVSALPLP (225 aa)) is LT domain. The active site involves E313.

The protein in the N-terminal section; belongs to the bacterial solute-binding protein 3 family. This sequence in the C-terminal section; belongs to the transglycosylase Slt family.

It is found in the cell outer membrane. The enzyme catalyses Exolytic cleavage of the (1-&gt;4)-beta-glycosidic linkage between N-acetylmuramic acid (MurNAc) and N-acetylglucosamine (GlcNAc) residues in peptidoglycan, from either the reducing or the non-reducing ends of the peptidoglycan chains, with concomitant formation of a 1,6-anhydrobond in the MurNAc residue.. Its function is as follows. Murein-degrading enzyme that degrades murein glycan strands and insoluble, high-molecular weight murein sacculi, with the concomitant formation of a 1,6-anhydromuramoyl product. Lytic transglycosylases (LTs) play an integral role in the metabolism of the peptidoglycan (PG) sacculus. Their lytic action creates space within the PG sacculus to allow for its expansion as well as for the insertion of various structures such as secretion systems and flagella. The chain is Membrane-bound lytic murein transglycosylase F from Erwinia tasmaniensis (strain DSM 17950 / CFBP 7177 / CIP 109463 / NCPPB 4357 / Et1/99).